The primary structure comprises 156 residues: Peptide methionine sulfoxide reductase MsrA (156 aa).

Cysteine 10 is an active-site residue.

This sequence belongs to the MsrA Met sulfoxide reductase family.

The enzyme catalyses L-methionyl-[protein] + [thioredoxin]-disulfide + H2O = L-methionyl-(S)-S-oxide-[protein] + [thioredoxin]-dithiol. It carries out the reaction [thioredoxin]-disulfide + L-methionine + H2O = L-methionine (S)-S-oxide + [thioredoxin]-dithiol. In terms of biological role, has an important function as a repair enzyme for proteins that have been inactivated by oxidation. Catalyzes the reversible oxidation-reduction of methionine sulfoxide in proteins to methionine. This is Peptide methionine sulfoxide reductase MsrA from Metamycoplasma arthritidis (strain 158L3-1) (Mycoplasma arthritidis).